Here is a 246-residue protein sequence, read N- to C-terminus: Pyridoxine 5'-phosphate synthase (246 aa).

Asn12 serves as a coordination point for 3-amino-2-oxopropyl phosphate. Residue 14–15 (DH) participates in 1-deoxy-D-xylulose 5-phosphate binding. Residue Arg23 participates in 3-amino-2-oxopropyl phosphate binding. His48 functions as the Proton acceptor in the catalytic mechanism. 1-deoxy-D-xylulose 5-phosphate contacts are provided by Arg50 and His55. Glu75 acts as the Proton acceptor in catalysis. Position 105 (Thr105) interacts with 1-deoxy-D-xylulose 5-phosphate. Catalysis depends on His196, which acts as the Proton donor. 3-amino-2-oxopropyl phosphate-binding positions include Gly197 and 218–219 (GH).

It belongs to the PNP synthase family. As to quaternary structure, homooctamer; tetramer of dimers.

The protein localises to the cytoplasm. The enzyme catalyses 3-amino-2-oxopropyl phosphate + 1-deoxy-D-xylulose 5-phosphate = pyridoxine 5'-phosphate + phosphate + 2 H2O + H(+). It functions in the pathway cofactor biosynthesis; pyridoxine 5'-phosphate biosynthesis; pyridoxine 5'-phosphate from D-erythrose 4-phosphate: step 5/5. Functionally, catalyzes the complicated ring closure reaction between the two acyclic compounds 1-deoxy-D-xylulose-5-phosphate (DXP) and 3-amino-2-oxopropyl phosphate (1-amino-acetone-3-phosphate or AAP) to form pyridoxine 5'-phosphate (PNP) and inorganic phosphate. This Pseudomonas putida (strain W619) protein is Pyridoxine 5'-phosphate synthase.